Consider the following 135-residue polypeptide: Nucleoside diphosphate kinase (135 aa).

Residues Lys-11, Phe-59, Arg-87, Thr-93, Arg-104, and Asn-114 each coordinate ATP. Residue His-117 is the Pros-phosphohistidine intermediate of the active site.

This sequence belongs to the NDK family. In terms of assembly, homotetramer. It depends on Mg(2+) as a cofactor.

It localises to the cytoplasm. It catalyses the reaction a 2'-deoxyribonucleoside 5'-diphosphate + ATP = a 2'-deoxyribonucleoside 5'-triphosphate + ADP. It carries out the reaction a ribonucleoside 5'-diphosphate + ATP = a ribonucleoside 5'-triphosphate + ADP. Functionally, major role in the synthesis of nucleoside triphosphates other than ATP. The ATP gamma phosphate is transferred to the NDP beta phosphate via a ping-pong mechanism, using a phosphorylated active-site intermediate. This chain is Nucleoside diphosphate kinase, found in Marinomonas sp. (strain MWYL1).